Here is a 477-residue protein sequence, read N- to C-terminus: 23S rRNA (uracil(1939)-C(5))-methyltransferase RlmD (477 aa).

Positions 7–66 (KTENFPPDWLLVESLDLEAQGVAHRADGKVVFIKGALPFELVSANVHRKKNNWEQGVVTA) constitute a TRAM domain. [4Fe-4S] cluster contacts are provided by Cys-79, Cys-89, Cys-92, and Cys-171. Residues Gln-280, Phe-309, Asn-314, Glu-330, Asn-365, and Asp-386 each contribute to the S-adenosyl-L-methionine site. Cys-432 (nucleophile) is an active-site residue.

The protein belongs to the class I-like SAM-binding methyltransferase superfamily. RNA M5U methyltransferase family. RlmD subfamily.

The enzyme catalyses uridine(1939) in 23S rRNA + S-adenosyl-L-methionine = 5-methyluridine(1939) in 23S rRNA + S-adenosyl-L-homocysteine + H(+). Catalyzes the formation of 5-methyl-uridine at position 1939 (m5U1939) in 23S rRNA. The chain is 23S rRNA (uracil(1939)-C(5))-methyltransferase RlmD from Albidiferax ferrireducens (strain ATCC BAA-621 / DSM 15236 / T118) (Rhodoferax ferrireducens).